A 248-amino-acid chain; its full sequence is Probable transcriptional regulatory protein RL3983 (248 aa).

It belongs to the TACO1 family.

The protein resides in the cytoplasm. This chain is Probable transcriptional regulatory protein RL3983, found in Rhizobium johnstonii (strain DSM 114642 / LMG 32736 / 3841) (Rhizobium leguminosarum bv. viciae).